The sequence spans 179 residues: Large ribosomal subunit protein uL5 (179 aa).

Belongs to the universal ribosomal protein uL5 family. In terms of assembly, part of the 50S ribosomal subunit; part of the 5S rRNA/L5/L18/L25 subcomplex. Contacts the 5S rRNA and the P site tRNA. Forms a bridge to the 30S subunit in the 70S ribosome.

This is one of the proteins that bind and probably mediate the attachment of the 5S RNA into the large ribosomal subunit, where it forms part of the central protuberance. In the 70S ribosome it contacts protein S13 of the 30S subunit (bridge B1b), connecting the 2 subunits; this bridge is implicated in subunit movement. Contacts the P site tRNA; the 5S rRNA and some of its associated proteins might help stabilize positioning of ribosome-bound tRNAs. The protein is Large ribosomal subunit protein uL5 of Citrifermentans bemidjiense (strain ATCC BAA-1014 / DSM 16622 / JCM 12645 / Bem) (Geobacter bemidjiensis).